Reading from the N-terminus, the 280-residue chain is Energy-coupling factor transporter ATP-binding protein EcfA1 (280 aa).

One can recognise an ABC transporter domain in the interval 6-241 (LRTENISFQY…SHMLQEIGLD (236 aa)). Residue 40–47 (GQNGSGKS) participates in ATP binding.

Belongs to the ABC transporter superfamily. Energy-coupling factor EcfA family. In terms of assembly, forms a stable energy-coupling factor (ECF) transporter complex composed of 2 membrane-embedded substrate-binding proteins (S component), 2 ATP-binding proteins (A component) and 2 transmembrane proteins (T component).

The protein resides in the cell membrane. Its function is as follows. ATP-binding (A) component of a common energy-coupling factor (ECF) ABC-transporter complex. Unlike classic ABC transporters this ECF transporter provides the energy necessary to transport a number of different substrates. The protein is Energy-coupling factor transporter ATP-binding protein EcfA1 of Bacillus cereus (strain ZK / E33L).